The chain runs to 359 residues: Gap junction alpha-5 protein (359 aa).

At 1 to 19 (MGDWSFLGEFLEEVHKHST) the chain is on the cytoplasmic side. A helical transmembrane segment spans residues 20 to 40 (VIGKVWLTVLFIFRMLVLGTA). Topologically, residues 41-76 (AESSWGDEQADFLCDTMQPGCENVCYDQAFPISHIR) are extracellular. Residues 77 to 97 (YWVLQVIFVSTPSLVYLGHAV) form a helical membrane-spanning segment. Over 98–165 (HMVRVQEKRK…CSILIRTTME (68 aa)) the chain is Cytoplasmic. The chain crosses the membrane as a helical span at residues 166-186 (VAFIVGQYLLYGVFLDTLHVC). The Extracellular segment spans residues 187–206 (RRSPCPHPVNCYVSRPTEKN). A helical membrane pass occupies residues 207 to 227 (VFIVFMLAVAGLSLFLSLAEL). The Cytoplasmic segment spans residues 228–359 (YHLGWKKIRQ…SKARSDDLSV (132 aa)). 2 disordered regions span residues 285–305 (SNKM…VRSQ) and 317–359 (RYAQ…DLSV). Ser-354 and Ser-358 each carry phosphoserine.

Belongs to the connexin family. Alpha-type (group II) subfamily. A connexon is composed of a hexamer of connexins.

Its subcellular location is the cell membrane. It localises to the cell junction. It is found in the gap junction. One gap junction consists of a cluster of closely packed pairs of transmembrane channels, the connexons, through which materials of low MW diffuse from one cell to a neighboring cell. This chain is Gap junction alpha-5 protein (GJA5), found in Bos taurus (Bovine).